The following is a 336-amino-acid chain: IgLON family member 5 (336 aa).

Residues 1-30 (MPPPAPGARLRLLAAAALAGLAVISRGLLS) form the signal peptide. Ig-like C2-type domains follow at residues 33 to 122 (LEFS…QPYT), 132 to 213 (PARI…VLVT), and 218 to 307 (PTIT…MRLL). Residues N41, N49, N67, and N137 are each glycosylated (N-linked (GlcNAc...) asparagine). A disulfide bond links C54 and C112. 2 disulfides stabilise this stretch: C154-C195 and C238-C291. N288 carries an N-linked (GlcNAc...) asparagine glycan.

The protein belongs to the immunoglobulin superfamily. IgLON family.

It localises to the secreted. This Mus musculus (Mouse) protein is IgLON family member 5 (Iglon5).